A 1578-amino-acid polypeptide reads, in one-letter code: E3 ubiquitin-protein ligase HECW2 (1578 aa).

Position 48 is a phosphoserine (Ser48). One can recognise a C2 domain in the interval 171–298; it reads MEGGASGSLH…LERQAGDQML (128 aa). Disordered stretches follow at residues 341–453 and 496–802; these read HTVN…FPTD and IDDG…PSVR. Polar residues predominate over residues 386-406; the sequence is RTSSTLEIDTEDLISTSSRNS. Residues 518–532 show a composition bias toward basic and acidic residues; sequence ASIHETASLEERLEN. Residues 559–576 are compositionally biased toward polar residues; sequence SADQGSTELCSSQEVDQP. Residues 577–593 are compositionally biased toward low complexity; that stretch reads TSGADAGASDTSGGSRR. Composition is skewed to polar residues over residues 597-614, 643-664, and 688-708; these read ETES…SSET, SSCN…SSLE, and PTSS…SSLP. Composition is skewed to low complexity over residues 721–735, 746–755, and 769–782; these read AAEA…ELGE, AAAAAPAAAA, and AQGA…QEEG. An interaction with TP73 region spans residues 737–1074; that stretch reads WQRRGSLEGA…PRPSSTFNTV (338 aa). In terms of domain architecture, WW 1 spans 813–846; that stretch reads EALPPNWEARIDSHGRIFYVDHVNRTTTWQRPTA. Residues 853–880 are a coiled coil; the sequence is LQRSNSIQQMEQLNRRYQSIRRTMTNER. Ser858 and Ser915 each carry phosphoserine. Positions 991–1024 constitute a WW 2 domain; sequence LELPRGWEMKHDHQGKAFFVDHNSRTTTFIDPRL. 2 disordered regions span residues 1030–1075 and 1167–1193; these read RPTS…NTVS and CQSP…RAPA. Residues 1037–1046 are compositionally biased toward basic residues; sequence HRQHLTRQRS. Positions 1167–1187 are enriched in polar residues; that stretch reads CQSPRGSPVSSPQNSPGTQRA. A Phosphoserine modification is found at Ser1181. The 336-residue stretch at 1243–1578 folds into the HECT domain; the sequence is SRKDLQRNKL…VEETSTFGLE (336 aa). Cys1546 functions as the Glycyl thioester intermediate in the catalytic mechanism.

Interacts with TP73. Interacts with FZR1.

The protein localises to the cytoplasm. It localises to the cytoskeleton. Its subcellular location is the spindle. The catalysed reaction is S-ubiquitinyl-[E2 ubiquitin-conjugating enzyme]-L-cysteine + [acceptor protein]-L-lysine = [E2 ubiquitin-conjugating enzyme]-L-cysteine + N(6)-ubiquitinyl-[acceptor protein]-L-lysine.. The protein operates within protein modification; protein ubiquitination. Functionally, E3 ubiquitin-protein ligase that mediates ubiquitination of TP73. Acts to stabilize TP73 and enhance activation of transcription by TP73. Involved in the regulation of mitotic metaphase/anaphase transition. This is E3 ubiquitin-protein ligase HECW2 (Hecw2) from Mus musculus (Mouse).